The sequence spans 1303 residues: DNA-directed RNA polymerase subunit beta (1303 aa).

It belongs to the RNA polymerase beta chain family. In terms of assembly, the RNAP catalytic core consists of 2 alpha, 1 beta, 1 beta' and 1 omega subunit. When a sigma factor is associated with the core the holoenzyme is formed, which can initiate transcription.

The enzyme catalyses RNA(n) + a ribonucleoside 5'-triphosphate = RNA(n+1) + diphosphate. DNA-dependent RNA polymerase catalyzes the transcription of DNA into RNA using the four ribonucleoside triphosphates as substrates. In Chlorobaculum tepidum (strain ATCC 49652 / DSM 12025 / NBRC 103806 / TLS) (Chlorobium tepidum), this protein is DNA-directed RNA polymerase subunit beta.